We begin with the raw amino-acid sequence, 181 residues long: Der GTPase-activating protein YihI (181 aa).

2 disordered regions span residues 1-75 (MSRK…KKIP) and 145-181 (EPEAEEEFEEEAPVRKSRSDDDLLADFEDFDMDDYKG). Residues 32 to 43 (RLRKKDKKRKGL) are compositionally biased toward basic residues. Acidic residues predominate over residues 146–155 (PEAEEEFEEE). Residues 156 to 165 (APVRKSRSDD) show a composition bias toward basic and acidic residues. Acidic residues predominate over residues 166–181 (DLLADFEDFDMDDYKG).

The protein belongs to the YihI family. In terms of assembly, interacts with Der.

A GTPase-activating protein (GAP) that modifies Der/EngA GTPase function. May play a role in ribosome biogenesis. The protein is Der GTPase-activating protein YihI of Vibrio vulnificus (strain CMCP6).